The primary structure comprises 128 residues: Transcription antitermination protein NusB (128 aa).

It belongs to the NusB family.

Its function is as follows. Involved in transcription antitermination. Required for transcription of ribosomal RNA (rRNA) genes. Binds specifically to the boxA antiterminator sequence of the ribosomal RNA (rrn) operons. The chain is Transcription antitermination protein NusB from Listeria welshimeri serovar 6b (strain ATCC 35897 / DSM 20650 / CCUG 15529 / CIP 8149 / NCTC 11857 / SLCC 5334 / V8).